The sequence spans 361 residues: Phosphoserine aminotransferase (361 aa).

Residue R42 participates in L-glutamate binding. Pyridoxal 5'-phosphate-binding positions include 76 to 77 (AT), W102, T152, D172, and Q195. The residue at position 196 (K196) is an N6-(pyridoxal phosphate)lysine. 237-238 (NT) provides a ligand contact to pyridoxal 5'-phosphate.

The protein belongs to the class-V pyridoxal-phosphate-dependent aminotransferase family. SerC subfamily. Homodimer. Pyridoxal 5'-phosphate serves as cofactor.

The protein resides in the cytoplasm. It carries out the reaction O-phospho-L-serine + 2-oxoglutarate = 3-phosphooxypyruvate + L-glutamate. The enzyme catalyses 4-(phosphooxy)-L-threonine + 2-oxoglutarate = (R)-3-hydroxy-2-oxo-4-phosphooxybutanoate + L-glutamate. It functions in the pathway amino-acid biosynthesis; L-serine biosynthesis; L-serine from 3-phospho-D-glycerate: step 2/3. It participates in cofactor biosynthesis; pyridoxine 5'-phosphate biosynthesis; pyridoxine 5'-phosphate from D-erythrose 4-phosphate: step 3/5. Functionally, catalyzes the reversible conversion of 3-phosphohydroxypyruvate to phosphoserine and of 3-hydroxy-2-oxo-4-phosphonooxybutanoate to phosphohydroxythreonine. The polypeptide is Phosphoserine aminotransferase (Stenotrophomonas maltophilia (strain R551-3)).